A 440-amino-acid polypeptide reads, in one-letter code: Light-independent protochlorophyllide reductase subunit N (440 aa).

Residues 1-24 (MTCRPALSDSHPPEPGTPSSPSFG) form a disordered region. The [4Fe-4S] cluster site is built by Cys42, Cys67, and Cys128.

Belongs to the BchN/ChlN family. As to quaternary structure, protochlorophyllide reductase is composed of three subunits; BchL, BchN and BchB. Forms a heterotetramer of two BchB and two BchN subunits. The cofactor is [4Fe-4S] cluster.

It catalyses the reaction chlorophyllide a + oxidized 2[4Fe-4S]-[ferredoxin] + 2 ADP + 2 phosphate = protochlorophyllide a + reduced 2[4Fe-4S]-[ferredoxin] + 2 ATP + 2 H2O. It functions in the pathway porphyrin-containing compound metabolism; bacteriochlorophyll biosynthesis (light-independent). In terms of biological role, component of the dark-operative protochlorophyllide reductase (DPOR) that uses Mg-ATP and reduced ferredoxin to reduce ring D of protochlorophyllide (Pchlide) to form chlorophyllide a (Chlide). This reaction is light-independent. The NB-protein (BchN-BchB) is the catalytic component of the complex. The protein is Light-independent protochlorophyllide reductase subunit N of Rhodospirillum rubrum (strain ATCC 11170 / ATH 1.1.1 / DSM 467 / LMG 4362 / NCIMB 8255 / S1).